Here is a 241-residue protein sequence, read N- to C-terminus: Demethylmenaquinone methyltransferase (241 aa).

S-adenosyl-L-methionine contacts are provided by residues T60, D81, and 106 to 107 (DA).

It belongs to the class I-like SAM-binding methyltransferase superfamily. MenG/UbiE family.

It catalyses the reaction a 2-demethylmenaquinol + S-adenosyl-L-methionine = a menaquinol + S-adenosyl-L-homocysteine + H(+). It functions in the pathway quinol/quinone metabolism; menaquinone biosynthesis; menaquinol from 1,4-dihydroxy-2-naphthoate: step 2/2. Methyltransferase required for the conversion of demethylmenaquinol (DMKH2) to menaquinol (MKH2). This chain is Demethylmenaquinone methyltransferase, found in Staphylococcus aureus (strain Mu3 / ATCC 700698).